The chain runs to 178 residues: Major urinary protein 4 (178 aa).

The N-terminal stretch at 1 to 16 (MKLLLCLGLTLVCIHA) is a signal peptide. Cysteines 80 and 173 form a disulfide.

Belongs to the calycin superfamily. Lipocalin family. As to expression, expressed in lacrimal gland, parotid gland, sublingual gland, nasal mucus, and vomeronasal organ.

The protein localises to the secreted. Its function is as follows. Binds pheromones, likely to displace pheromones complexed to urinary MUPs and transport them to the vomeronasal organ (VNO) where they associate with their neuronal receptor(s). MUP4 is highly specific for the male mouse pheromone 2-sec-butyl-4,5-dihydrothiazole (SBT). In Mus musculus (Mouse), this protein is Major urinary protein 4 (Mup4).